The following is a 382-amino-acid chain: Mannitol-1-phosphate 5-dehydrogenase (382 aa).

3–14 serves as a coordination point for NAD(+); the sequence is AVHFGAGNIGRG.

The protein belongs to the mannitol dehydrogenase family.

The catalysed reaction is D-mannitol 1-phosphate + NAD(+) = beta-D-fructose 6-phosphate + NADH + H(+). This Exiguobacterium sp. (strain ATCC BAA-1283 / AT1b) protein is Mannitol-1-phosphate 5-dehydrogenase.